Consider the following 454-residue polypeptide: Cell division cycle-associated 7-like protein (454 aa).

Positions 9-33 match the Integrase domain-binding motif 1 (IBM1) motif; the sequence is IPKEVADIFNAPSDDEEFVGFRDDV. Serine 21 is subject to Phosphoserine. The Integrase domain-binding motif 2 (IBM2) motif lies at 65–91; that stretch reads FTEELRRIFIEDTDSETEDFAGFTQSD. Threonine 77 bears the Phosphothreonine mark. Serine 79 carries the post-translational modification Phosphoserine. A phosphothreonine mark is found at threonine 81 and threonine 88. 2 disordered regions span residues 103–169 and 188–213; these read VESD…LFSS and QVIQ…SSDA. Phosphoserine is present on residues serine 105, serine 108, serine 117, serine 138, serine 139, serine 162, serine 195, and serine 197. Residues 117 to 126 show a composition bias toward acidic residues; the sequence is SEEEEDEEED. The interval 213–235 is MYC-binding; the sequence is ALLKRTMNIKENKAMLAQLLAEL. Residues lysine 222 and lysine 225 each participate in a glycyl lysine isopeptide (Lys-Gly) (interchain with G-Cter in SUMO2) cross-link. Serine 261 is subject to Phosphoserine.

Interacts with MYC. Interacts (via IBM motifs) with PSIP1 (via IBD domain); phosphorylation increases its affinity for PSIP1. Post-translationally, phosphorylation increases its interaction with PSIP1. As to expression, ubiquitous. Overexpressed in medulloblastoma.

It localises to the cytoplasm. Its subcellular location is the nucleus. Plays a role in transcriptional regulation as a repressor that inhibits monoamine oxidase A (MAOA) activity and gene expression by binding to the promoter. Plays an important oncogenic role in mediating the full transforming effect of MYC in medulloblastoma cells. Involved in apoptotic signaling pathways; May act downstream of P38-kinase and BCL-2, but upstream of CASP3/caspase-3 as well as CCND1/cyclin D1 and E2F1. The sequence is that of Cell division cycle-associated 7-like protein (CDCA7L) from Homo sapiens (Human).